The chain runs to 530 residues: Ubiquitin carboxyl-terminal hydrolase 17-like protein 24 (530 aa).

The region spanning 80 to 375 is the USP domain; sequence AGLQNMGNTC…QAYVLFYIQK (296 aa). The active-site Nucleophile is C89. The Proton acceptor role is filled by H334. Composition is skewed to basic and acidic residues over residues 382-392 and 398-412; these read SESVSRGREPR and DTDR…KRDH. Disordered regions lie at residues 382 to 412 and 477 to 530; these read SESV…KRDH and NHHP…LVCQ. Residues 493–505 show a composition bias toward polar residues; the sequence is TPTHQESMNTGTL. Basic residues predominate over residues 510-524; the sequence is GRARRSKGKNKHSKR.

The protein belongs to the peptidase C19 family. USP17 subfamily. Expressed in heart, brain, liver and skeletal muscle.

It is found in the nucleus. It localises to the nucleolus. The protein resides in the endoplasmic reticulum. It carries out the reaction Thiol-dependent hydrolysis of ester, thioester, amide, peptide and isopeptide bonds formed by the C-terminal Gly of ubiquitin (a 76-residue protein attached to proteins as an intracellular targeting signal).. Functionally, deubiquitinating enzyme that removes conjugated ubiquitin from specific proteins to regulate different cellular processes that may include cell proliferation, progression through the cell cycle, apoptosis, cell migration, and the cellular response to viral infection. The sequence is that of Ubiquitin carboxyl-terminal hydrolase 17-like protein 24 (USP17L24) from Homo sapiens (Human).